A 200-amino-acid chain; its full sequence is Recombination protein RecR (200 aa).

The segment at 60–75 (CVYCQALTEDDVCNIC) adopts a C4-type zinc-finger fold. Positions 83–177 (TKLCIIESML…KISRIGFGVP (95 aa)) constitute a Toprim domain.

Belongs to the RecR family.

May play a role in DNA repair. It seems to be involved in an RecBC-independent recombinational process of DNA repair. It may act with RecF and RecO. The polypeptide is Recombination protein RecR (Francisella tularensis subsp. tularensis (strain WY96-3418)).